The sequence spans 111 residues: uncharacterized protein (111 aa).

It is found in the mitochondrion. This is an uncharacterized protein from Arabidopsis thaliana (Mouse-ear cress).